We begin with the raw amino-acid sequence, 353 residues long: Protein RecA (353 aa).

75–82 (GPESSGKT) lines the ATP pocket.

This sequence belongs to the RecA family.

The protein resides in the cytoplasm. Can catalyze the hydrolysis of ATP in the presence of single-stranded DNA, the ATP-dependent uptake of single-stranded DNA by duplex DNA, and the ATP-dependent hybridization of homologous single-stranded DNAs. It interacts with LexA causing its activation and leading to its autocatalytic cleavage. The polypeptide is Protein RecA (Cupriavidus necator (Alcaligenes eutrophus)).